Consider the following 396-residue polypeptide: S-adenosylmethionine synthase 1 (396 aa).

Position 12 (glutamate 12) interacts with Mg(2+). Histidine 18 contributes to the ATP binding site. A K(+)-binding site is contributed by glutamate 46. Glutamate 59 and glutamine 102 together coordinate L-methionine. ATP is bound by residues 170-172 (DGK), 238-241 (SGRF), aspartate 249, 255-256 (RK), alanine 272, lysine 276, and lysine 280. Residue aspartate 249 coordinates L-methionine. Lysine 280 is a binding site for L-methionine.

It belongs to the AdoMet synthase family. Homotetramer. Mn(2+) serves as cofactor. Requires Mg(2+) as cofactor. It depends on Co(2+) as a cofactor. K(+) is required as a cofactor.

The protein localises to the cytoplasm. The catalysed reaction is L-methionine + ATP + H2O = S-adenosyl-L-methionine + phosphate + diphosphate. The protein operates within amino-acid biosynthesis; S-adenosyl-L-methionine biosynthesis; S-adenosyl-L-methionine from L-methionine: step 1/1. Catalyzes the formation of S-adenosylmethionine from methionine and ATP. The reaction comprises two steps that are both catalyzed by the same enzyme: formation of S-adenosylmethionine (AdoMet) and triphosphate, and subsequent hydrolysis of the triphosphate. The chain is S-adenosylmethionine synthase 1 (SAM1) from Oryza sativa subsp. japonica (Rice).